We begin with the raw amino-acid sequence, 955 residues long: Coiled-coil domain-containing protein 146 (955 aa).

A compositionally biased stretch (acidic residues) spans 1-17; sequence MEDSSTDTEKEEEEEKD. Residues 1 to 22 form a disordered region; the sequence is MEDSSTDTEKEEEEEKDEKDQE. 5 coiled-coil regions span residues 114–141, 169–321, 400–461, 534–640, and 667–832; these read EAFSTEVSKMREQLLKYQNEYNAVKERE, GEME…AREN, STLS…LLRM, KAHQ…RNES, and NGEI…MKQA.

As to quaternary structure, interacts with CCDC38 and CCDC42. Interacts with intraflagellar transport proteins IFT20 and IFT88. (Microbial infection) Interacts with Chlamydia trachomatis incM/YT288. In host cells infected with C.trachomatis incM, CCDC146 is recruited to the periphery of the pathogen-containing vacuole but recruitment is not dependent on incM. In terms of tissue distribution, widely expressed.

The protein localises to the cytoplasm. Its subcellular location is the cytoskeleton. It localises to the microtubule organizing center. It is found in the centrosome. The protein resides in the centriole. The protein localises to the flagellum axoneme. Its subcellular location is the cilium basal body. It localises to the midbody. Its function is as follows. Essential for sperm flagellum biogenesis and male fertility. This Homo sapiens (Human) protein is Coiled-coil domain-containing protein 146 (CCDC146).